The primary structure comprises 313 residues: Porphobilinogen deaminase (313 aa).

At Cys242 the chain carries S-(dipyrrolylmethanemethyl)cysteine.

Belongs to the HMBS family. Monomer. Dipyrromethane serves as cofactor.

It carries out the reaction 4 porphobilinogen + H2O = hydroxymethylbilane + 4 NH4(+). Its pathway is porphyrin-containing compound metabolism; protoporphyrin-IX biosynthesis; coproporphyrinogen-III from 5-aminolevulinate: step 2/4. Its function is as follows. Tetrapolymerization of the monopyrrole PBG into the hydroxymethylbilane pre-uroporphyrinogen in several discrete steps. This chain is Porphobilinogen deaminase, found in Escherichia coli O6:H1 (strain CFT073 / ATCC 700928 / UPEC).